The following is a 218-amino-acid chain: Riboflavin kinase (218 aa).

The interval 1–27 (MRPDGPRDPVAGPDSGPEPPYPVRLSG) is disordered. Residues Thr-44 and Asn-46 each contribute to the Mg(2+) site. Residue Glu-120 is the Nucleophile of the active site.

This sequence belongs to the flavokinase family. It depends on Zn(2+) as a cofactor. Requires Mg(2+) as cofactor.

It catalyses the reaction riboflavin + ATP = FMN + ADP + H(+). The protein operates within cofactor biosynthesis; FMN biosynthesis; FMN from riboflavin (ATP route): step 1/1. Functionally, catalyzes the phosphorylation of riboflavin (vitamin B2) to form flavin mononucleotide (FMN) coenzyme. The chain is Riboflavin kinase (fmn1) from Neosartorya fischeri (strain ATCC 1020 / DSM 3700 / CBS 544.65 / FGSC A1164 / JCM 1740 / NRRL 181 / WB 181) (Aspergillus fischerianus).